A 383-amino-acid chain; its full sequence is Probable L-aspartate decarboxylase (383 aa).

Position 231 is an N6-(pyridoxal phosphate)lysine (Lys-231).

Belongs to the group II decarboxylase family. MfnA subfamily. Pyridoxal 5'-phosphate serves as cofactor.

It carries out the reaction L-aspartate + H(+) = beta-alanine + CO2. It participates in cofactor biosynthesis; coenzyme A biosynthesis. Functionally, catalyzes the decarboxylation of L-aspartate to produce beta-alanine. This chain is Probable L-aspartate decarboxylase, found in Thermococcus gammatolerans (strain DSM 15229 / JCM 11827 / EJ3).